The sequence spans 295 residues: Small ribosomal subunit protein uS2 (295 aa).

S2 is modified (N-acetylserine). The residue at position 43 (S43) is a Phosphoserine. Residue K52 is modified to N6-acetyllysine. The interaction with PPP1R16B stretch occupies residues 54 to 113 (TWEKLLLAARAIVAIENPADVSVISSRNTGQRAVLKFAAATGATPIAGRFTPGTFTNQIQ). At K89 the chain carries N6-acetyllysine; alternate. K89 participates in a covalent cross-link: Glycyl lysine isopeptide (Lys-Gly) (interchain with G-Cter in SUMO2); alternate. T97 carries the post-translational modification Phosphothreonine. Laminin-binding stretches follow at residues 161–180 (IPCN…MLAR) and 205–229 (RDPE…EFQG). 5 [DE]-W-[ST] repeats span residues 230–232 (EWT), 247–249 (DWS), 266–268 (DWS), 275–277 (DWS), and 293–295 (EWS). The tract at residues 242-295 (QPEVADWSEGVQVPSVPIQQFPTEDWSAQPATEDWSAAPTAQATEWVGTTTEWS) is laminin-binding. The tract at residues 266 to 295 (DWSAQPATEDWSAAPTAQATEWVGTTTEWS) is disordered. A compositionally biased stretch (polar residues) spans 280 to 295 (PTAQATEWVGTTTEWS).

Belongs to the universal ribosomal protein uS2 family. In terms of assembly, monomer (37LRP) and homodimer (67LR). Component of the small ribosomal subunit. Mature ribosomes consist of a small (40S) and a large (60S) subunit. The 40S subunit contains about 33 different proteins and 1 molecule of RNA (18S). The 60S subunit contains about 49 different proteins and 3 molecules of RNA (28S, 5.8S and 5S). Interacts with RPS21. Interacts with several laminins including at least LAMB1. Interacts with MDK. The mature dimeric form interacts with PPP1R16B (via its fourth ankyrin repeat). Interacts with PPP1CA only in the presence of PPP1R16B. In terms of processing, acylated. Acylation may be a prerequisite for conversion of the monomeric 37 kDa laminin receptor precursor (37LRP) to the mature dimeric 67 kDa laminin receptor (67LR), and may provide a mechanism for membrane association. Cleaved by stromelysin-3 (ST3) at the cell surface. Cleavage by stromelysin-3 may be a mechanism to alter cell-extracellular matrix interactions.

Its subcellular location is the cell membrane. It is found in the cytoplasm. The protein localises to the nucleus. In terms of biological role, required for the assembly and/or stability of the 40S ribosomal subunit. Required for the processing of the 20S rRNA-precursor to mature 18S rRNA in a late step of the maturation of 40S ribosomal subunits. Also functions as a cell surface receptor for laminin. Plays a role in cell adhesion to the basement membrane and in the consequent activation of signaling transduction pathways. May play a role in cell fate determination and tissue morphogenesis. Also acts as a receptor for several other ligands, including the pathogenic prion protein, viruses, and bacteria. Acts as a PPP1R16B-dependent substrate of PPP1CA. This Oryctolagus cuniculus (Rabbit) protein is Small ribosomal subunit protein uS2.